A 106-amino-acid chain; its full sequence is Large ribosomal subunit protein eL30 (106 aa).

This sequence belongs to the eukaryotic ribosomal protein eL30 family. Component of the large ribosomal subunit. Mature ribosomes consist of a small (40S) and a large (60S) subunit. The 40S subunit contains about 32 different proteins and 1 molecule of RNA (18S). The 60S subunit contains 45 different proteins and 3 molecules of RNA (25S, 5.8S and 5S).

It is found in the cytoplasm. Component of the ribosome, a large ribonucleoprotein complex responsible for the synthesis of proteins in the cell. The small ribosomal subunit (SSU) binds messenger RNAs (mRNAs) and translates the encoded message by selecting cognate aminoacyl-transfer RNA (tRNA) molecules. The large subunit (LSU) contains the ribosomal catalytic site termed the peptidyl transferase center (PTC), which catalyzes the formation of peptide bonds, thereby polymerizing the amino acids delivered by tRNAs into a polypeptide chain. The nascent polypeptides leave the ribosome through a tunnel in the LSU and interact with protein factors that function in enzymatic processing, targeting, and the membrane insertion of nascent chains at the exit of the ribosomal tunnel. This is Large ribosomal subunit protein eL30 from Candida albicans (strain SC5314 / ATCC MYA-2876) (Yeast).